We begin with the raw amino-acid sequence, 196 residues long: Holliday junction resolvase RecU (196 aa).

4 residues coordinate Mg(2+): Thr-82, Asp-84, Glu-97, and Gln-116.

This sequence belongs to the RecU family. The cofactor is Mg(2+).

It is found in the cytoplasm. It carries out the reaction Endonucleolytic cleavage at a junction such as a reciprocal single-stranded crossover between two homologous DNA duplexes (Holliday junction).. Endonuclease that resolves Holliday junction intermediates in genetic recombination. Cleaves mobile four-strand junctions by introducing symmetrical nicks in paired strands. Promotes annealing of linear ssDNA with homologous dsDNA. Required for DNA repair, homologous recombination and chromosome segregation. The protein is Holliday junction resolvase RecU of Oceanobacillus iheyensis (strain DSM 14371 / CIP 107618 / JCM 11309 / KCTC 3954 / HTE831).